The following is a 239-amino-acid chain: Large ribosomal subunit protein uL1 (239 aa).

It belongs to the universal ribosomal protein uL1 family. In terms of assembly, part of the 50S ribosomal subunit.

Binds directly to 23S rRNA. The L1 stalk is quite mobile in the ribosome, and is involved in E site tRNA release. Functionally, protein L1 is also a translational repressor protein, it controls the translation of the L11 operon by binding to its mRNA. This is Large ribosomal subunit protein uL1 from Acidothermus cellulolyticus (strain ATCC 43068 / DSM 8971 / 11B).